The primary structure comprises 209 residues: Cyclin-dependent kinase inhibitor 2 (209 aa).

The segment at 1-32 is required for nuclear localization; it reads MAAVRRRERDVVEENGVTTTTVKRRKMEEEVD.

This sequence belongs to the CDI family. ICK/KRP subfamily. In terms of assembly, specifically interacts with CDKA-1, but not with CDKB1-1. Phosphorylated.

It localises to the nucleus. The protein resides in the nucleoplasm. Functionally, binds and inhibits CYCD2-1/CDKA-1 complex kinase activity. Regulates cell division which is crucial for plant growth, development and morphogenesis. May regulate early lateral root initiation by blocking the G1/S phase transition. Controls the mitosis-to-endocycle transition and the onset of the endoreduplication cycle during leaf development through inhibition of mitotic CDKA-1 kinase complexes. Specifically targets CDKA-1. This is Cyclin-dependent kinase inhibitor 2 (KRP2) from Arabidopsis thaliana (Mouse-ear cress).